A 308-amino-acid chain; its full sequence is Very-long-chain enoyl-CoA reductase (308 aa).

Residues 1-86 (MKHYEVEIRD…YFRDLGAQIS (86 aa)) are Cytoplasmic-facing. Position 22 is an N6-acetyllysine (lysine 22). The residue at position 58 (serine 58) is a Phosphoserine. The residue at position 60 (lysine 60) is an N6-acetyllysine. The chain crosses the membrane as a helical span at residues 87–106 (WVTVFLTEYAGPLFIYLLFY). Residues 107–124 (FRVPFIYGRKYDFTSSRH) lie on the Lumenal side of the membrane. Residues 125 to 147 (TVVHLACMCHSFHYIKRLLETLF) traverse the membrane as a helical segment. The Cytoplasmic portion of the chain corresponds to 148 to 158 (VHRFSHGTMPL). Residues 159–180 (RNIFKNCTYYWGFAAWMAYYIN) traverse the membrane as a helical segment. The Lumenal segment spans residues 181–189 (HPLYTPPTY). A helical membrane pass occupies residues 190–216 (GVQQVKLALAVFVICQLGNFSIHMALR). The Cytoplasmic segment spans residues 217–245 (DLRPAGSKTRKIPYPTKNPFTWLFLLVSC). Residues 246 to 262 (PNYTYEVGSWIGFAILT) form a helical membrane-spanning segment. The Lumenal segment spans residues 263 to 264 (QC). The chain crosses the membrane as a helical span at residues 265–292 (VPVALFSLVGFTQMTIWAKGKHRSYLKE). Residues 293-308 (FRDYPPLRMPIIPFLL) are Cytoplasmic-facing.

This sequence belongs to the steroid 5-alpha reductase family. As to quaternary structure, interacts with ELOVL1 and LASS2. Post-translationally, glycosylated.

The protein resides in the endoplasmic reticulum membrane. The enzyme catalyses a very-long-chain 2,3-saturated fatty acyl-CoA + NADP(+) = a very-long-chain (2E)-enoyl-CoA + NADPH + H(+). It catalyses the reaction octadecanoyl-CoA + NADP(+) = (2E)-octadecenoyl-CoA + NADPH + H(+). It carries out the reaction (2E,7Z,10Z,13Z,16Z)-docosapentaenoyl-CoA + NADPH + H(+) = (7Z,10Z,13Z,16Z)-docosatetraenoyl-CoA + NADP(+). The catalysed reaction is (2E,7Z,10Z,13Z,16Z,19Z)-docosahexaenoyl-CoA + NADPH + H(+) = (7Z,10Z,13Z,16Z,19Z)-docosapentaenoyl-CoA + NADP(+). The enzyme catalyses (2E,8Z,11Z,14Z)-eicosatetraenoyl-CoA + NADPH + H(+) = (8Z,11Z,14Z)-eicosatrienoyl-CoA + NADP(+). It catalyses the reaction (2E)-hexadecenoyl-CoA + NADPH + H(+) = hexadecanoyl-CoA + NADP(+). The protein operates within lipid metabolism; fatty acid biosynthesis. It functions in the pathway lipid metabolism; sphingolipid metabolism. In terms of biological role, involved in both the production of very long-chain fatty acids for sphingolipid synthesis and the degradation of the sphingosine moiety in sphingolipids through the sphingosine 1-phosphate metabolic pathway. Catalyzes the last of the four reactions of the long-chain fatty acids elongation cycle. This endoplasmic reticulum-bound enzymatic process, allows the addition of 2 carbons to the chain of long- and very long-chain fatty acids/VLCFAs per cycle. This enzyme reduces the trans-2,3-enoyl-CoA fatty acid intermediate to an acyl-CoA that can be further elongated by entering a new cycle of elongation. Thereby, it participates in the production of VLCFAs of different chain lengths that are involved in multiple biological processes as precursors of membrane lipids and lipid mediators. Catalyzes the saturation step of the sphingosine 1-phosphate metabolic pathway, the conversion of trans-2-hexadecenoyl-CoA to palmitoyl-CoA. The sequence is that of Very-long-chain enoyl-CoA reductase (Tecr) from Mus musculus (Mouse).